Consider the following 166-residue polypeptide: MSDEGKLFIGGLNFDTNEESLEQVFSKYGQISEVVVVKDRETKRSRGFGFVTFENPDDAKDAMMAMNGKAVDGRQIRVDQAGKSSGDRRGGYRGGSSGGRGFFRGGRGRGGGDRGYGSSRFDNRSGGYGGSSGSRDYYSSGRSQGSYGDRAGGSYRDSYDSYATHE.

The RRM domain occupies 5–83 (GKLFIGGLNF…RQIRVDQAGK (79 aa)). Residues 68 to 166 (GKAVDGRQIR…DSYDSYATHE (99 aa)) are disordered. Gly residues predominate over residues 92-115 (YRGGSSGGRGFFRGGRGRGGGDRG). A compositionally biased stretch (low complexity) spans 133 to 149 (GSRDYYSSGRSQGSYGD). Over residues 157 to 166 (DSYDSYATHE) the composition is skewed to basic and acidic residues.

Interacts with prmt1. Interacts with elavl1/elrA (via RRM3). Associates with ribosomes. Methylated on arginine residues within RGG motifs. Methylation by prmt1 promotes cytoplasmic accumulation. In adults, most abundant in testis, ovary, brain and liver, with lower expression in kidney and heart.

The protein localises to the nucleus. Its subcellular location is the nucleoplasm. It is found in the cytoplasm. In terms of biological role, cold-inducible mRNA binding protein. Acts cooperatively with elavl1/elrA to stabilize AU-rich element (ARE)-containing mRNAs by binding to them and inhibiting their deadenylation. Essential for embryonic gastrulation and neural development, acting to maintain the expression of a set of adhesion molecules, and cell movement during embryogenesis. Required for pronephros development. The chain is Cold-inducible RNA-binding protein B (cirbp-b) from Xenopus laevis (African clawed frog).